The following is a 345-amino-acid chain: Anthranilate phosphoribosyltransferase 1 (345 aa).

5-phospho-alpha-D-ribose 1-diphosphate contacts are provided by residues Gly-86, 89-90, Thr-94, 96-99, 114-122, and Ser-126; these read GD, NIST, and KHGGRGVSS. Gly-86 is an anthranilate binding site. Position 98 (Ser-98) interacts with Mg(2+). Arg-172 serves as a coordination point for anthranilate. Mg(2+) is bound by residues Asp-231 and Glu-232.

This sequence belongs to the anthranilate phosphoribosyltransferase family. As to quaternary structure, homodimer. The cofactor is Mg(2+).

The enzyme catalyses N-(5-phospho-beta-D-ribosyl)anthranilate + diphosphate = 5-phospho-alpha-D-ribose 1-diphosphate + anthranilate. Its pathway is amino-acid biosynthesis; L-tryptophan biosynthesis; L-tryptophan from chorismate: step 2/5. Catalyzes the transfer of the phosphoribosyl group of 5-phosphorylribose-1-pyrophosphate (PRPP) to anthranilate to yield N-(5'-phosphoribosyl)-anthranilate (PRA). The sequence is that of Anthranilate phosphoribosyltransferase 1 from Ralstonia nicotianae (strain ATCC BAA-1114 / GMI1000) (Ralstonia solanacearum).